Reading from the N-terminus, the 404-residue chain is Dual-specificity RNA methyltransferase RlmN (404 aa).

Residue E118 is the Proton acceptor of the active site. Residues 125-357 enclose the Radical SAM core domain; that stretch reads VGRAGALCVS…NKAGYSSPIR (233 aa). C132 and C368 form a disulfide bridge. The [4Fe-4S] cluster site is built by C139, C143, and C146. Residues 194 to 195, S226, 248 to 250, and N325 each bind S-adenosyl-L-methionine; these read GE and SLH. The S-methylcysteine intermediate role is filled by C368.

It belongs to the radical SAM superfamily. RlmN family. [4Fe-4S] cluster is required as a cofactor.

Its subcellular location is the cytoplasm. It carries out the reaction adenosine(2503) in 23S rRNA + 2 reduced [2Fe-2S]-[ferredoxin] + 2 S-adenosyl-L-methionine = 2-methyladenosine(2503) in 23S rRNA + 5'-deoxyadenosine + L-methionine + 2 oxidized [2Fe-2S]-[ferredoxin] + S-adenosyl-L-homocysteine. It catalyses the reaction adenosine(37) in tRNA + 2 reduced [2Fe-2S]-[ferredoxin] + 2 S-adenosyl-L-methionine = 2-methyladenosine(37) in tRNA + 5'-deoxyadenosine + L-methionine + 2 oxidized [2Fe-2S]-[ferredoxin] + S-adenosyl-L-homocysteine. In terms of biological role, specifically methylates position 2 of adenine 2503 in 23S rRNA and position 2 of adenine 37 in tRNAs. m2A2503 modification seems to play a crucial role in the proofreading step occurring at the peptidyl transferase center and thus would serve to optimize ribosomal fidelity. The polypeptide is Dual-specificity RNA methyltransferase RlmN (Caulobacter vibrioides (strain ATCC 19089 / CIP 103742 / CB 15) (Caulobacter crescentus)).